Consider the following 204-residue polypeptide: tRNA (guanine-N(7)-)-methyltransferase (204 aa).

3 residues coordinate S-adenosyl-L-methionine: E36, E61, and D111. D111 is a catalytic residue. Residues K115, D147, and 177–180 contribute to the substrate site; that span reads TRFE.

It belongs to the class I-like SAM-binding methyltransferase superfamily. TrmB family.

It carries out the reaction guanosine(46) in tRNA + S-adenosyl-L-methionine = N(7)-methylguanosine(46) in tRNA + S-adenosyl-L-homocysteine. The protein operates within tRNA modification; N(7)-methylguanine-tRNA biosynthesis. Its function is as follows. Catalyzes the formation of N(7)-methylguanine at position 46 (m7G46) in tRNA. The protein is tRNA (guanine-N(7)-)-methyltransferase of Chlorobium phaeobacteroides (strain DSM 266 / SMG 266 / 2430).